Reading from the N-terminus, the 333-residue chain is Putative fimbrium anchoring subunit Fim4B (333 aa).

The first 20 residues, 1-20 (MRNTRYGFLVLLSSLLMLTG), serve as a signal peptide directing secretion. A lipid anchor (N-palmitoyl cysteine) is attached at cysteine 21. The S-diacylglycerol cysteine moiety is linked to residue cysteine 21. Residues 274–333 (ENAGTGEDGKPTPPPEIELPPDDKIEVDKPETPPNPDGGGGMGGNVDGWGPEDNVELPVN) form a disordered region. Residues 294-304 (PDDKIEVDKPE) are compositionally biased toward basic and acidic residues. Gly residues predominate over residues 310–320 (DGGGGMGGNVD).

This sequence belongs to the bacteroidetes fimbrillin superfamily. FimB/Mfa2 family.

The protein localises to the cell outer membrane. Putative fimbrium anchoring subunit. This is Putative fimbrium anchoring subunit Fim4B from Bacteroides ovatus (strain ATCC 8483 / DSM 1896 / JCM 5824 / BCRC 10623 / CCUG 4943 / NCTC 11153).